Consider the following 75-residue polypeptide: uncharacterized protein (75 aa).

Positions Phe-19 to Gln-38 are enriched in polar residues. The segment at Phe-19 to Lys-42 is disordered. The chain crosses the membrane as a helical span at residues Leu-47–Gln-66.

Its subcellular location is the membrane. This is an uncharacterized protein from Saccharomyces cerevisiae (strain ATCC 204508 / S288c) (Baker's yeast).